The chain runs to 313 residues: Cobalamin biosynthesis protein CobD (313 aa).

The next 5 helical transmembrane spans lie at 52-72 (VAGA…GAAL), 79-99 (CWPV…TSLA), 154-174 (VVPL…YRAI), 204-224 (YVGA…VGGS), and 289-309 (AVVL…MLVY).

This sequence belongs to the CobD/CbiB family.

Its subcellular location is the cell membrane. Its pathway is cofactor biosynthesis; adenosylcobalamin biosynthesis. In terms of biological role, converts cobyric acid to cobinamide by the addition of aminopropanol on the F carboxylic group. The polypeptide is Cobalamin biosynthesis protein CobD (Mycobacterium bovis (strain ATCC BAA-935 / AF2122/97)).